A 237-amino-acid polypeptide reads, in one-letter code: Small ribosomal subunit protein uS5 (237 aa).

A disordered region spans residues M1–G59. Over residues P20–N55 the composition is skewed to basic and acidic residues. Residues L63–V126 enclose the S5 DRBM domain.

Belongs to the universal ribosomal protein uS5 family. As to quaternary structure, part of the 30S ribosomal subunit. Contacts proteins S4 and S8.

Its function is as follows. With S4 and S12 plays an important role in translational accuracy. Located at the back of the 30S subunit body where it stabilizes the conformation of the head with respect to the body. The polypeptide is Small ribosomal subunit protein uS5 (Novosphingobium aromaticivorans (strain ATCC 700278 / DSM 12444 / CCUG 56034 / CIP 105152 / NBRC 16084 / F199)).